Reading from the N-terminus, the 336-residue chain is F420-dependent glucose-6-phosphate dehydrogenase (336 aa).

Asp-39 serves as a coordination point for coenzyme F420-(gamma-Glu)n. Residue His-40 is the Proton donor of the active site. Coenzyme F420-(gamma-Glu)n is bound by residues Thr-76 and 107–108 (TG). The Proton acceptor role is filled by Glu-109. Coenzyme F420-(gamma-Glu)n contacts are provided by residues Asn-112, 177-178 (GG), and 180-181 (LV). The substrate site is built by Thr-195, Lys-198, Lys-259, and Arg-283.

This sequence belongs to the F420-dependent glucose-6-phosphate dehydrogenase family. As to quaternary structure, homodimer.

It catalyses the reaction oxidized coenzyme F420-(gamma-L-Glu)(n) + D-glucose 6-phosphate + H(+) = 6-phospho-D-glucono-1,5-lactone + reduced coenzyme F420-(gamma-L-Glu)(n). Functionally, catalyzes the coenzyme F420-dependent oxidation of glucose 6-phosphate (G6P) to 6-phosphogluconolactone. The polypeptide is F420-dependent glucose-6-phosphate dehydrogenase (Nocardia farcinica (strain IFM 10152)).